We begin with the raw amino-acid sequence, 237 residues long: Phosphoribosylaminoimidazole-succinocarboxamide synthase (237 aa).

This sequence belongs to the SAICAR synthetase family.

It carries out the reaction 5-amino-1-(5-phospho-D-ribosyl)imidazole-4-carboxylate + L-aspartate + ATP = (2S)-2-[5-amino-1-(5-phospho-beta-D-ribosyl)imidazole-4-carboxamido]succinate + ADP + phosphate + 2 H(+). Its pathway is purine metabolism; IMP biosynthesis via de novo pathway; 5-amino-1-(5-phospho-D-ribosyl)imidazole-4-carboxamide from 5-amino-1-(5-phospho-D-ribosyl)imidazole-4-carboxylate: step 1/2. The chain is Phosphoribosylaminoimidazole-succinocarboxamide synthase from Escherichia coli O127:H6 (strain E2348/69 / EPEC).